A 2193-amino-acid chain; its full sequence is Genome polyprotein (2193 aa).

The tract at residues 1–22 is disordered; that stretch reads MGSQVSTQRSGSHENSNSATEG. The N-myristoyl glycine; by host moiety is linked to residue Gly-2. Residues 2–1503 lie on the Cytoplasmic side of the membrane; the sequence is GSQVSTQRSG…HLNRAVLVMQ (1502 aa). Positions 568–588 are amphipathic alpha-helix; the sequence is RVADVIESSIGDSVSRALTQA. Catalysis depends on for protease 2A activity residues His-883 and Asp-901. Zn(2+)-binding residues include Cys-918 and Cys-920. Residue Cys-972 is the For protease 2A activity of the active site. Cys-978 and His-980 together coordinate Zn(2+). One can recognise an SF3 helicase domain in the interval 1216 to 1374; the sequence is EKRMNNYMQF…SKTDLGRLDA (159 aa). 1240–1247 contacts ATP; it reads GSPGTGKS. 3 residues coordinate Zn(2+): Cys-1381, Cys-1392, and Cys-1397. Residues 1381-1397 form a C4-type; degenerate zinc finger; that stretch reads CSENNTANFKRCSPLVC. The stretch at 1504-1519 is an intramembrane region; sequence SIATVVAVVSLVYVIY. Residues 1520–2193 lie on the Cytoplasmic side of the membrane; sequence KLFAGFQGAY…NLRRNWLELF (674 aa). An O-(5'-phospho-RNA)-tyrosine modification is found at Tyr-1529. The Peptidase C3 domain occupies 1549–1727; the sequence is GPSLDFALSL…FCAGLKRSYF (179 aa). Residues His-1588, Glu-1619, and Cys-1695 each act as for protease 3C activity in the active site. Residues 1958 to 2073 enclose the RdRp catalytic domain; that stretch reads GSLFAFDYSG…ASYPFPIDCL (116 aa). Mg(2+) is bound by residues Asp-1964 and Asp-2060.

The protein belongs to the picornaviruses polyprotein family. In terms of assembly, interacts with capsid protein VP1 and capsid protein VP3 to form heterotrimeric protomers. Interacts with capsid protein VP0, and capsid protein VP3 to form heterotrimeric protomers. Five protomers subsequently associate to form pentamers which serve as building blocks for the capsid. Interacts with capsid protein VP2, capsid protein VP3 and capsid protein VP4 following cleavage of capsid protein VP0. Interacts with host SCARB2. Interacts with host ARF6; this interaction mediates viral endocytosis. As to quaternary structure, interacts with capsid protein VP1 and capsid protein VP3 in the mature capsid. Interacts with host SCARB2. In terms of assembly, interacts with capsid protein VP0 and capsid protein VP1 to form heterotrimeric protomers. Five protomers subsequently associate to form pentamers which serve as building blocks for the capsid. Interacts with capsid protein VP4 in the mature capsid. Interacts with protein 2C; this interaction may be important for virion morphogenesis. Interacts with capsid protein VP1 and capsid protein VP3. As to quaternary structure, homodimer. In terms of assembly, interacts with host BAX; this interaction activates the mitochondrial apoptotic pathway. Interacts with host ILF2. Homohexamer; forms a hexameric ring structure with 6-fold symmetry characteristic of AAA+ ATPases. Interacts (via N-terminus) with host RTN3 (via reticulon domain); this interaction is important for viral replication. Interacts with capsid protein VP3; this interaction may be important for virion morphogenesis. As to quaternary structure, interacts with protein 3CD. In terms of assembly, homodimer. Interacts with host GBF1. Interacts (via GOLD domain) with host ACBD3 (via GOLD domain); this interaction allows the formation of a viral protein 3A/ACBD3 heterotetramer with a 2:2 stoichiometry, which will stimulate the recruitment of host PI4KB in order to synthesize PI4P at the viral RNA replication sites. Interacts with RNA-directed RNA polymerase. As to quaternary structure, interacts with host IFIH1/MDA5; this interaction inhibits host IFIH1. In terms of assembly, interacts with protein 3AB and with RNA-directed RNA polymerase. Interacts with Viral protein genome-linked and with protein 3CD. Requires Mg(2+) as cofactor. Specific enzymatic cleavages in vivo by the viral proteases yield processing intermediates and the mature proteins. Post-translationally, myristoylation is required for the formation of pentamers during virus assembly. Further assembly of 12 pentamers and a molecule of genomic RNA generates the provirion. In terms of processing, during virion maturation, immature virions are rendered infectious following cleavage of VP0 into VP4 and VP2. This maturation seems to be an autocatalytic event triggered by the presence of RNA in the capsid and it is followed by a conformational change infectious virion. Myristoylation is required during RNA encapsidation and formation of the mature virus particle. Post-translationally, VPg is uridylylated by the polymerase into VPg-pUpU. This acts as a nucleotide-peptide primer for the genomic RNA replication.

Its subcellular location is the virion. It localises to the host cytoplasm. The protein localises to the host cytoplasmic vesicle membrane. The protein resides in the host nucleus. It carries out the reaction a ribonucleoside 5'-triphosphate + H2O = a ribonucleoside 5'-diphosphate + phosphate + H(+). It catalyses the reaction Selective cleavage of Tyr-|-Gly bond in the picornavirus polyprotein.. The catalysed reaction is RNA(n) + a ribonucleoside 5'-triphosphate = RNA(n+1) + diphosphate. The enzyme catalyses Selective cleavage of Gln-|-Gly bond in the poliovirus polyprotein. In other picornavirus reactions Glu may be substituted for Gln, and Ser or Thr for Gly.. Replication or transcription is subject to high level of random mutations by the nucleotide analog ribavirin. Functionally, forms an icosahedral capsid of pseudo T=3 symmetry with capsid proteins VP2 and VP3. The capsid is 300 Angstroms in diameter, composed of 60 copies of each capsid protein and enclosing the viral positive strand RNA genome. Capsid protein VP1 mainly forms the vertices of the capsid. Capsid protein VP1, together with VP2, interacts with host cell receptor SCARB2 to provide virion attachment to target host cells. This attachment induces virion internalization. After binding to its receptor, the capsid undergoes conformational changes. Capsid protein VP1 N-terminus (that contains an amphipathic alpha-helix) and capsid protein VP4 are externalized. Together, they shape a pore in the host membrane through which viral genome is translocated to host cell cytoplasm. Forms an icosahedral capsid of pseudo T=3 symmetry with capsid proteins VP2 and VP3. The capsid is 300 Angstroms in diameter, composed of 60 copies of each capsid protein and enclosing the viral positive strand RNA genome. Capsid protein VP2, together with VP1, interacts with host cell receptor SCARB2 to provide virion attachment to target host cells. In terms of biological role, forms an icosahedral capsid of pseudo T=3 symmetry with capsid proteins VP2 and VP3. The capsid is 300 Angstroms in diameter, composed of 60 copies of each capsid protein and enclosing the viral positive strand RNA genome. Its function is as follows. Lies on the inner surface of the capsid shell. After binding to the host receptor, the capsid undergoes conformational changes. Capsid protein VP4 is released, Capsid protein VP1 N-terminus is externalized, and together, they shape a pore in the host membrane through which the viral genome is translocated into the host cell cytoplasm. Functionally, component of immature procapsids, which is cleaved into capsid proteins VP4 and VP2 after maturation. Allows the capsid to remain inactive before the maturation step. Cysteine protease that cleaves viral polyprotein and specific host proteins. It is responsible for the autocatalytic cleavage between the P1 and P2 regions, which is the first cleavage occurring in the polyprotein. Also cleaves the host translation initiation factor EIF4G1, in order to shut down the capped cellular mRNA translation. Inhibits the host nucleus-cytoplasm protein and RNA trafficking by cleaving host members of the nuclear pores. Counteracts stress granule formation probably by antagonizing its assembly or promoting its dissassembly. Cleaves and inhibits host IFIH1/MDA5, thereby inhibiting the type-I IFN production and the establishment of the antiviral state. Cleaves and inhibits host MAVS, thereby inhibiting the type-I IFN production and the establishment of the antiviral state. In terms of biological role, plays an essential role in the virus replication cycle by acting as a viroporin. Creates a pore in the host endoplasmic reticulum and as a consequence releases Ca2+ in the cytoplasm of infected cell. In turn, high levels of cytoplasmic calcium may trigger membrane trafficking and transport of viral ER-associated proteins to viroplasms, sites of viral genome replication. Its function is as follows. Induces and associates with structural rearrangements of intracellular membranes. Displays RNA-binding, nucleotide binding and NTPase activities. May play a role in virion morphogenesis and viral RNA encapsidation by interacting with the capsid protein VP3. Functionally, localizes the viral replication complex to the surface of membranous vesicles. Together with protein 3CD binds the Cis-Active RNA Element (CRE) which is involved in RNA synthesis initiation. Acts as a cofactor to stimulate the activity of 3D polymerase, maybe through a nucleid acid chaperone activity. Localizes the viral replication complex to the surface of membranous vesicles. It inhibits host cell endoplasmic reticulum-to-Golgi apparatus transport and causes the disassembly of the Golgi complex, possibly through GBF1 interaction. This would result in depletion of MHC, trail receptors and IFN receptors at the host cell surface. Plays an essential role in viral RNA replication by recruiting ACBD3 and PI4KB at the viral replication sites, thereby allowing the formation of the rearranged membranous structures where viral replication takes place. In terms of biological role, acts as a primer for viral RNA replication and remains covalently bound to viral genomic RNA. VPg is uridylylated prior to priming replication into VPg-pUpU. The oriI viral genomic sequence may act as a template for this. The VPg-pUpU is then used as primer on the genomic RNA poly(A) by the RNA-dependent RNA polymerase to replicate the viral genome. During genome replication, the VPg-RNA linkage is removed by the host TDP2, thereby accelerating replication. During the late stage of the replication cycle, host TDP2 is excluded from sites of viral RNA synthesis and encapsidation, allowing for the generation of progeny virions. Its function is as follows. Involved in the viral replication complex and viral polypeptide maturation. It exhibits protease activity with a specificity and catalytic efficiency that is different from protease 3C. Protein 3CD lacks polymerase activity. Protein 3CD binds to the 5'UTR of the viral genome. Functionally, major viral protease that mediates proteolytic processing of the polyprotein. Cleaves host EIF5B, contributing to host translation shutoff. Also cleaves host PABPC1, contributing to host translation shutoff. Disassembles host cytoplasmic stress granules by cleaving host G3BP1, although this effect is less prononced than the inhibition induced by protease 2A. Cleaves host RIGI and thus contributes to the inhibition of type I interferon production. Cleaves host IRF7 and thus contributes to the inhibition of type I interferon production. Cleaves host HNRNPA1 thereby increasing the translation of apoptosis protease activating factor APAF1, leading to apoptosis of the host cell. Cleaves host NLRP1, triggers host N-glycine-mediated degradation of the autoinhibitory NLRP1 N-terminal fragment. Replicates the viral genomic RNA on the surface of intracellular membranes. May form linear arrays of subunits that propagate along a strong head-to-tail interaction called interface-I. Covalently attaches UMP to a tyrosine of VPg, which is used to prime RNA synthesis. The positive stranded RNA genome is first replicated at virus induced membranous vesicles, creating a dsRNA genomic replication form. This dsRNA is then used as template to synthesize positive stranded RNA genomes. ss(+)RNA genomes are either translated, replicated or encapsidated. The polypeptide is Genome polyprotein (Human enterovirus 71 (strain 7423/MS/87) (EV71)).